The sequence spans 271 residues: Transmembrane protein 150A (271 aa).

Over 1–2 the chain is Cytoplasmic; that stretch reads MT. A helical membrane pass occupies residues 3–23; that stretch reads AWILLPVSLSAFSITGIWTVY. At 24–75 the chain is on the extracellular side; it reads AMAVMNRHVCPVENWSYNESCSPDPAEQGGPKSCCTLDDVPLISKCGTYPPE. N-linked (GlcNAc...) asparagine glycans are attached at residues N37 and N41. The helical transmembrane segment at 76-96 threads the bilayer; sequence SCLFSLIGNMGAVMVALICLL. The Cytoplasmic segment spans residues 97–108; that stretch reads RYGQLLEQSRHS. A helical membrane pass occupies residues 109-129; sequence WINTTALITGCTNAAGLVVVG. The Extracellular portion of the chain corresponds to 130–140; the sequence is NFQVDHAKSLH. A helical transmembrane segment spans residues 141–161; sequence YIGTGVAFTAGLLFVCLHCVL. Residues 162–178 are Cytoplasmic-facing; it reads FYHGATTPLDMAMAYLR. A helical transmembrane segment spans residues 179–199; it reads SVLAVIAFITLVLSGVFFLHE. Residues 200–211 lie on the Extracellular side of the membrane; that stretch reads SSQLQHGAALCE. The chain crosses the membrane as a helical span at residues 212-232; it reads WVFVLDILIFYGTFSYEFGTI. Topologically, residues 233 to 271 are cytoplasmic; sequence SSDTLVAALQPAPGRACKSSGSSSTSTHLNCAPESIAMI.

Belongs to the DRAM/TMEM150 family. Interacts (via C-terminal cytoplasmic tail) with PI4KA.

It is found in the cell membrane. Its function is as follows. Regulates localization of phosphatidylinositol 4-kinase (PI4K) to the plasma membrane, possibly by reducing the association of TTC7 (TTC7A or TTC7B) with the PI4K complex. Acts as a regulator of phosphatidylinositol 4-phosphate (PtdIns(4)P) synthesis. May also play a role in fasting-induced catabolism. This chain is Transmembrane protein 150A (Tmem150a), found in Mus musculus (Mouse).